A 2171-amino-acid chain; its full sequence is Mediator of DNA damage checkpoint protein 1 (2171 aa).

Positions 1 to 19 are enriched in acidic residues; the sequence is MEDTQAIDWDVEEEEETEQ. Residues 1–22 form a disordered region; the sequence is MEDTQAIDWDVEEEEETEQSSE. Positions 1-150 are interaction with CHEK2; the sequence is MEDTQAIDWD…SRGPLTVEET (150 aa). Residues 2-220 are interaction with the MRN complex; that stretch reads EDTQAIDWDV…PFAFNLNSDT (219 aa). Position 4 is a phosphothreonine (T4). An FHA domain is found at 54 to 105; that stretch reads NVVGRMPDCSVALPFPSISKQHAEIEILAWDKAPILRDCGSLNGTQILRPPK. The residue at position 108 (S108) is a Phosphoserine. Positions 145–568 are required for nuclear localization (NLS1); the sequence is LTVEETPRVQ…PAKLLVVSLE (424 aa). Position 146 is a phosphothreonine (T146). Phosphoserine occurs at positions 168, 176, 196, and 218. Disordered stretches follow at residues 185 to 248 and 261 to 317; these read RTTS…AKQS and DQPL…AEVH. Position 220 is a phosphothreonine (T220). Positions 261-278 are enriched in basic and acidic residues; sequence DQPLVKERDDDTKVKRGA. At S299 the chain carries Phosphoserine. The residue at position 301 (T301) is a Phosphothreonine. Basic and acidic residues predominate over residues 306–317; that stretch reads DSRPPGRPAEVH. S329 is subject to Phosphoserine. T331 is modified (phosphothreonine). The tract at residues 355–387 is disordered; the sequence is GVGTRGPGAPGLAHLQESQAGSDTDVEEGKAPQ. Phosphoserine is present on residues S372 and S376. T378 carries the phosphothreonine modification. 3 positions are modified to phosphoserine: S394, S397, and S402. Residue T404 is modified to Phosphothreonine. At S411 the chain carries Phosphoserine. Disordered regions lie at residues 443–469 and 481–522; these read QRSQ…NREA and VRAH…VDIN. At T449 the chain carries Phosphothreonine. The residue at position 453 (S453) is a Phosphoserine. Residue T455 is modified to Phosphothreonine. A phosphoserine mark is found at S485, S495, S498, S504, S505, and S513. Residues 513–522 are compositionally biased toward polar residues; it reads SQASTTVDIN. T523 is subject to Phosphothreonine. S590 carries the phosphoserine modification. K616 participates in a covalent cross-link: Glycyl lysine isopeptide (Lys-Gly) (interchain with G-Cter in SUMO1); alternate. Residue K616 forms a Glycyl lysine isopeptide (Lys-Gly) (interchain with G-Cter in SUMO2); alternate linkage. Disordered stretches follow at residues 653 to 689 and 780 to 1969; these read DTLG…DNYG and SPPR…TKLN. Positions 671 to 685 are enriched in basic and acidic residues; that stretch reads GREREQHVGGTKDSE. S780 and S793 each carry phosphoserine. The residue at position 812 (K812) is an N6-acetyllysine. Basic and acidic residues-rich tracts occupy residues 819 to 844, 851 to 862, 868 to 905, and 914 to 951; these read ETAE…ERQT, ELTKGKQDREQK, DTQR…EKQV, and AFER…RGEP. A phosphoserine mark is found at S955 and S998. Residues 955-964 show a composition bias toward polar residues; it reads SQDQKGQASS. Positions 1016-1031 are enriched in basic and acidic residues; that stretch reads KASRIRAAEKVSRGDQ. A Phosphoserine modification is found at S1033. The span at 1040–1051 shows a compositional bias: pro residues; it reads PTVPEAPAPPQK. Phosphoserine occurs at positions 1068 and 1086. Over residues 1103 to 1113 the composition is skewed to basic residues; it reads PKPKIRTRKSS. Polar residues-rich tracts occupy residues 1129–1157 and 1170–1187; these read PSTS…SVKT and PCTS…SQVT. Positions 1148 to 1692 are interaction with the PRKDC complex; sequence SRTNRSSVKT…TNRSSVKTPE (545 aa). T1157 carries the phosphothreonine modification. A Phosphothreonine modification is found at T1198. The segment covering 1210–1227 has biased composition (polar residues); sequence QPSTSTDRPVTSEPTSHA. Phosphoserine is present on S1235. T1239 carries the phosphothreonine modification. A compositionally biased stretch (polar residues) spans 1251–1268; the sequence is QPSTSTDQPVTSEPTYQA. Phosphothreonine is present on residues T1280 and T1302. The span at 1306–1318 shows a compositional bias: low complexity; sequence TSRTTRSRTNMSS. 2 stretches are compositionally biased toward polar residues: residues 1334–1350 and 1375–1403; these read PSTS…TSRA and PSTS…SVKT. The span at 1429–1441 shows a compositional bias: low complexity; that stretch reads TSRTTRSRTNMSS. Polar residues predominate over residues 1457–1473; it reads PSTSTEQPVTPEPTSRA. Phosphoserine occurs at positions 1481 and 1482. N6-acetyllysine is present on K1484. The residue at position 1485 (T1485) is a Phosphothreonine. K1495 participates in a covalent cross-link: Glycyl lysine isopeptide (Lys-Gly) (interchain with G-Cter in SUMO1); alternate. K1495 is covalently cross-linked (Glycyl lysine isopeptide (Lys-Gly) (interchain with G-Cter in SUMO2); alternate). Polar residues-rich tracts occupy residues 1498–1526, 1538–1557, and 1580–1596; these read PSTS…SVKT, QPST…QVTR, and ASAS…TSRT. T1507 and T1548 each carry phosphothreonine. T1615 and T1630 each carry phosphothreonine. Polar residues-rich tracts occupy residues 1620-1649 and 1661-1678; these read QPST…SVKT and QPST…TSRA. S1646 bears the Phosphoserine mark. Residues T1649 and T1671 each carry the phosphothreonine modification. S1686 bears the Phosphoserine mark. T1690 is subject to Phosphothreonine. Positions 1693 to 1702 are enriched in pro residues; that stretch reads PVVPTAPEPH. Residues 1706–1718 show a composition bias toward polar residues; the sequence is STDQPVTPKLTSR. A phosphothreonine mark is found at T1712, T1746, and T1753. Polar residues predominate over residues 1760 to 1771; it reads GGQSKTLRSSTV. S1763 is modified (phosphoserine). Position 1779 is a phosphothreonine (T1779). Over residues 1780 to 1801 the composition is skewed to polar residues; the sequence is PEFQSPVTTDQPISPEPITQPS. The tract at residues 1780 to 2171 is required for nuclear localization (NLS2); the sequence is PEFQSPVTTD…VLSPLEMSST (392 aa). S1784 and S1793 each carry phosphoserine. A Glycyl lysine isopeptide (Lys-Gly) (interchain with G-Cter in SUMO2) cross-link involves residue K1822. Phosphoserine is present on S1857. Residue K1872 forms a Glycyl lysine isopeptide (Lys-Gly) (interchain with G-Cter in SUMO2) linkage. T1882 is subject to Phosphothreonine. S1902 carries the post-translational modification Phosphoserine. The segment covering 1905-1918 has biased composition (polar residues); sequence HQKQPQRGEVSQKT. K1922 participates in a covalent cross-link: Glycyl lysine isopeptide (Lys-Gly) (interchain with G-Cter in SUMO1); alternate. A Glycyl lysine isopeptide (Lys-Gly) (interchain with G-Cter in SUMO2); alternate cross-link involves residue K1922. Positions 1929–1939 are enriched in basic and acidic residues; sequence AEKPGKEEDVV. T1940 carries the phosphothreonine modification. BRCT domains are found at residues 1974 to 2052 and 2073 to 2164; these read APKV…EYVV and RERR…FVLS. An Omega-N-methylarginine modification is found at R2025.

In terms of assembly, homodimer. Interacts with H2AX, which requires phosphorylation of H2AX on 'Ser-139'. Interacts with the MRN complex, composed of MRE11, RAD50, and NBN. Interacts with CHEK2, which requires ATM-mediated phosphorylation of 'Thr-68' within the FHA domain of CHEK2. Interacts constitutively with the BRCA1-BARD1 complex, SMC1A and TP53BP1. Interacts with ATM and FANCD2, and these interactions are reduced upon DNA damage. Also interacts with the PRKDC complex, composed of XRCC6/KU70, XRCC5/KU80 and PRKDC/XRCC7. This interaction may be required for PRKDC autophosphorylation, which is essential for DNA double strand break (DSB) repair. When phosphorylated by ATM, interacts with RNF8 (via FHA domain). Interacts with CEP164. When phosphorylated, interacts with APTX (via FHA-like domain). Interacts (when phosphorylated) with TOPBP1; promoting TOPBP1 localization to DNA damage sites during mitosis. Interacts (when phosphorylated) with NBN; promoting NBN and MRN complex localization to DNA damage sites. Phosphorylated upon exposure to ionizing radiation (IR), ultraviolet radiation (UV), and hydroxyurea (HU). Phosphorylation in response to IR requires ATM, NBN, and possibly CHEK2. Also phosphorylated during the G2/M phase of the cell cycle and during activation of the mitotic spindle checkpoint. Phosphorylation at Thr-4 by ATM stabilizes and enhances homodimerization via the FHA domain. Phosphorylated at Ser-168 and Ser-196 by CK2 in response to DNA damage during mitosis, promoting interaction with TOPBP1. Phosphorylated by CK2 in response to DNA damage, promoting interaction with NBN and recruitment of the MRN complex to DNA damage sites. In terms of processing, sumoylation at Lys-1922 by PIAS4 following DNA damage promotes ubiquitin-mediated degradation. Post-translationally, ubiquitinated by RNF4, leading to proteasomal degradation; undergoes 'Lys-48'-linked polyubiquitination.

Its subcellular location is the nucleus. The protein resides in the chromosome. Functionally, histone reader protein required for checkpoint-mediated cell cycle arrest in response to DNA damage within both the S phase and G2/M phases of the cell cycle. Specifically recognizes and binds histone H2AX phosphorylated at 'Ser-139', a marker of DNA damage, serving as a scaffold for the recruitment of DNA repair and signal transduction proteins to discrete foci of DNA damage sites. Also required for downstream events subsequent to the recruitment of these proteins. These include phosphorylation and activation of the ATM, CHEK1 and CHEK2 kinases, and stabilization of TP53/p53 and apoptosis. ATM and CHEK2 may also be activated independently by a parallel pathway mediated by TP53BP1. Required for chromosomal stability during mitosis by promoting recruitment of TOPBP1 to DNA double strand breaks (DSBs): TOPBP1 forms filamentous assemblies that bridge MDC1 and tether broken chromosomes during mitosis. Required for the repair of DSBs via homologous recombination by promoting recruitment of NBN component of the MRN complex to DSBs. This Pan troglodytes (Chimpanzee) protein is Mediator of DNA damage checkpoint protein 1 (MDC1).